The following is an 85-amino-acid chain: Large ribosomal subunit protein bL27 (85 aa).

Residues 1 to 23 (MAHKKAGGSSRNGRDSESKRLGV) are disordered.

It belongs to the bacterial ribosomal protein bL27 family.

The polypeptide is Large ribosomal subunit protein bL27 (Nitrosococcus oceani (strain ATCC 19707 / BCRC 17464 / JCM 30415 / NCIMB 11848 / C-107)).